The sequence spans 528 residues: Ivanolysin (528 aa).

The signal sequence occupies residues 1-23 (MKKIMLLLMTLLLVSLPLAQEAQ). Beta stranded transmembrane passes span 213 to 226 (ESQL…AFKA), 233 to 242 (VNFGAISEGK), 311 to 320 (STRVKAAFDT), and 328 to 340 (KGDT…IQNA). Positions 482 to 492 (ECTGLAWEWWR) match the Conserved undecapeptide motif. Residues 514 to 515 (TL) carry the Cholesterol binding motif.

This sequence belongs to the cholesterol-dependent cytolysin family. Homooligomeric pore complex of 35 to 50 subunits; when inserted in the host membrane.

The protein resides in the secreted. It is found in the host membrane. Functionally, a cholesterol-dependent toxin that causes cytolysis by forming pores in cholesterol containing host membranes. After binding to target membranes, the protein undergoes a major conformation change, leading to its insertion in the host membrane and formation of an oligomeric pore complex. Cholesterol is required for binding to host membranes, membrane insertion and pore formation; cholesterol binding is mediated by a Thr-Leu pair in the C-terminus. Can be reversibly inactivated by oxidation. This chain is Ivanolysin (ilo), found in Listeria ivanovii.